Consider the following 385-residue polypeptide: 6-hydroxynicotinate 3-monooxygenase (385 aa).

The signal sequence occupies residues 1 to 20 (MSQSPRIAVVGAGLGGAAAA). Residues glycine 15, 34-35 (EQ), histidine 47, arginine 108, and leucine 130 each bind FAD. The active-site Proton acceptor is the histidine 47. The active-site Proton acceptor is tyrosine 215. FAD is bound by residues aspartate 294 and 307-308 (AA).

Belongs to the 6-hydroxynicotinate 3-monooxygenase family. Monomer. FAD is required as a cofactor.

It catalyses the reaction 6-hydroxynicotinate + NADH + O2 + 2 H(+) = 2,5-dihydroxypyridine + CO2 + NAD(+) + H2O. Inhibited competitively by nicotinic acid with a Ki of 0.49 mM. Inhibited by thiol-specific compounds p-chloromercuribenzoate, DTNB, Ag(2)SO(4), HgCl(2), CuCl(2) and N-ethylmaleimide. No inhibition by o-phenanthroline, 8-hydroxyquinoline, EDTA, disodium 4,5-dihydroxy-m-benzenedisulfonate, fluoride, azide, KCl, LiCl, NaCl, BaCl(2), MnCl(2), MgCl(2), PBCl, ZnCl(2), CoCl(2), SnCl(2), FeSO(4), FeCl(3), NiCl(2), CdCl(2), AlCl(3), iodoacetic acid, hydro-xylamine, phenylhydrazine, semicarbazide, cysteamine, alpha,alpha-dipyridyl and urea. Its function is as follows. Flavin-dependent monooxygenase (FMO) that catalyzes the decarboxylative hydroxylation of 6-hydroxynicotinic acid (6-HNA) to 2,5-dihydroxypyridine (2,5-DHP) with concomitant oxidation of NADH, a step in the aerobic nicotinate degradation pathway. Uses NADH in preference to NADPH as an electron donor. This chain is 6-hydroxynicotinate 3-monooxygenase (nicC), found in Pseudomonas fluorescens.